The sequence spans 1756 residues: Multifunctional conjugation protein TraI (1756 aa).

The interval 1 to 330 (MLSFSVVKSA…TQAIAGLSER (330 aa)) is DNA relaxase. The active-site O-(5'-phospho-DNA)-tyrosine intermediate; for relaxase activity is Y16. Y17 acts as the Relaxase in catalysis. The Mg(2+) site is built by H146, H157, and H159. A DNA helicase I region spans residues 950–1500 (GKEAVTPLME…LRDVAAGRAV (551 aa)). 992-999 (GYAGVGKT) contacts ATP. Residues 1719–1753 (EQEAVREVARENLLQERLQQIERDMVRDLQKEKTL) are a coiled coil.

The protein to TraI of plasmid F. Monomer. Part of the relaxosome, a complex composed of plasmid-encodes TraI, TraM, TraY and host-encoded IHF bound to the F plasmid origin of transfer (oriT). Directly contacts coupling protein TraD. Seems to directly contact TraM via its C-terminus. It depends on Mg(2+) as a cofactor.

It localises to the cytoplasm. It catalyses the reaction ATP-independent breakage of single-stranded DNA, followed by passage and rejoining.. The catalysed reaction is ATP + H2O = ADP + phosphate + H(+). In terms of biological role, conjugative DNA transfer (CDT) is the unidirectional transfer of ssDNA plasmid from a donor to a recipient cell. It is the central mechanism by which antibiotic resistance and virulence factors are propagated in bacterial populations. Part of the relaxosome, which facilitates a site- and strand-specific cut in the origin of transfer by TraI, at the nic site. Relaxosome formation requires binding of IHF and TraY to the oriT region, which then facilitates binding of TraI relaxase. TraI forms a covalent 5'-phosphotyrosine intermediate linkage to the ssDNA. The transesterified T-strand moves from the donor cell to the recipient cell in a 5'to 3' direction, with the DNA helicase activity of TraI unwinding the DNA. DNA transfer occurs via the conjugative pore (transferosome) an intercellular junction mediated by a type IV secretion system, with TraD providing the means to link the relaxosome to the conjugative pore. The relaxase completes DNA transfer by reversing the covalent phosphotyrosine linkage and releasing the T-strand. Functionally, traI has also been identified as DNA helicase I. DNA. helicase I is a potent, highly processive DNA-dependent ATPase, able to unwind about 1.1 kb dsDNA per second in a 5' to 3' manner. The sequence is that of Multifunctional conjugation protein TraI (traI) from Escherichia coli.